We begin with the raw amino-acid sequence, 100 residues long: Small ribosomal subunit protein bS20 (100 aa).

The span at 1–20 shows a compositional bias: basic residues; sequence MASGKPKKKNPRLASGRKRV. A disordered region spans residues 1-21; it reads MASGKPKKKNPRLASGRKRVR.

It belongs to the bacterial ribosomal protein bS20 family.

Its function is as follows. Binds directly to 16S ribosomal RNA. The protein is Small ribosomal subunit protein bS20 of Albidiferax ferrireducens (strain ATCC BAA-621 / DSM 15236 / T118) (Rhodoferax ferrireducens).